A 519-amino-acid polypeptide reads, in one-letter code: Glutamate--cysteine ligase (519 aa).

The protein belongs to the glutamate--cysteine ligase type 1 family. Type 1 subfamily.

The catalysed reaction is L-cysteine + L-glutamate + ATP = gamma-L-glutamyl-L-cysteine + ADP + phosphate + H(+). The protein operates within sulfur metabolism; glutathione biosynthesis; glutathione from L-cysteine and L-glutamate: step 1/2. The protein is Glutamate--cysteine ligase of Erwinia tasmaniensis (strain DSM 17950 / CFBP 7177 / CIP 109463 / NCPPB 4357 / Et1/99).